We begin with the raw amino-acid sequence, 264 residues long: Thymidylate synthase (264 aa).

Arg-21 provides a ligand contact to dUMP. Position 51 (His-51) interacts with (6R)-5,10-methylene-5,6,7,8-tetrahydrofolate. Residue 126–127 (RR) coordinates dUMP. Residue Cys-146 is the Nucleophile of the active site. Residues 166–169 (RSAD), Asn-177, and 207–209 (HIY) each bind dUMP. (6R)-5,10-methylene-5,6,7,8-tetrahydrofolate is bound at residue Asp-169. Ser-263 is a (6R)-5,10-methylene-5,6,7,8-tetrahydrofolate binding site.

This sequence belongs to the thymidylate synthase family. Bacterial-type ThyA subfamily. Homodimer.

It is found in the cytoplasm. It carries out the reaction dUMP + (6R)-5,10-methylene-5,6,7,8-tetrahydrofolate = 7,8-dihydrofolate + dTMP. It participates in pyrimidine metabolism; dTTP biosynthesis. Its function is as follows. Catalyzes the reductive methylation of 2'-deoxyuridine-5'-monophosphate (dUMP) to 2'-deoxythymidine-5'-monophosphate (dTMP) while utilizing 5,10-methylenetetrahydrofolate (mTHF) as the methyl donor and reductant in the reaction, yielding dihydrofolate (DHF) as a by-product. This enzymatic reaction provides an intracellular de novo source of dTMP, an essential precursor for DNA biosynthesis. The chain is Thymidylate synthase from Exiguobacterium sp. (strain ATCC BAA-1283 / AT1b).